A 129-amino-acid polypeptide reads, in one-letter code: Ribulose bisphosphate carboxylase small subunit (129 aa).

The span at 104-120 shows a compositional bias: basic and acidic residues; sequence ENEPSLRMTRTESDGRS. Residues 104 to 129 are disordered; the sequence is ENEPSLRMTRTESDGRSQHYTWETQR.

Belongs to the RuBisCO small chain family. As to quaternary structure, heterohexadecamer of 8 large and 8 small subunits.

Functionally, ruBisCO catalyzes two reactions: the carboxylation of D-ribulose 1,5-bisphosphate, the primary event in carbon dioxide fixation, as well as the oxidative fragmentation of the pentose substrate. Both reactions occur simultaneously and in competition at the same active site. Although the small subunit is not catalytic it is essential for maximal activity. In Sinorhizobium medicae (strain WSM419) (Ensifer medicae), this protein is Ribulose bisphosphate carboxylase small subunit.